The chain runs to 665 residues: Cinnamate reductase (665 aa).

FMN is bound at residue glutamine 109. Residue tyrosine 182 is the Proton donor of the active site. Residues arginine 230, arginine 319, and 341–342 contribute to the FMN site; that span reads GR. Residues cysteine 365, cysteine 368, cysteine 372, and cysteine 384 each contribute to the [4Fe-4S] cluster site. Alanine 415, glutamate 434, asparagine 442, lysine 452, and alanine 479 together coordinate FAD.

It in the N-terminal section; belongs to the NADH:flavin oxidoreductase/NADH oxidase family. It depends on FMN as a cofactor. The cofactor is FAD. [4Fe-4S] cluster serves as cofactor.

The enzyme catalyses 3-phenylpropanoate + NAD(+) = (E)-cinnamate + NADH + H(+). Its pathway is amino-acid degradation; L-phenylalanine degradation. Involved in the fermentation of L-phenylalanine via a Stickland reaction. Catalyzes the reduction of (E)-cinnamate to yield 3-phenylpropionate. The polypeptide is Cinnamate reductase (Clostridium sporogenes (strain ATCC 7955 / DSM 767 / NBRC 16411 / NCIMB 8053 / NCTC 8594 / PA 3679)).